The following is a 132-amino-acid chain: Small ribosomal subunit protein uS8 (132 aa).

This sequence belongs to the universal ribosomal protein uS8 family. As to quaternary structure, part of the 30S ribosomal subunit. Contacts proteins S5 and S12.

In terms of biological role, one of the primary rRNA binding proteins, it binds directly to 16S rRNA central domain where it helps coordinate assembly of the platform of the 30S subunit. The chain is Small ribosomal subunit protein uS8 from Rhodopseudomonas palustris (strain HaA2).